The sequence spans 186 residues: Meiotically up-regulated gene 163 protein (186 aa).

The protein resides in the mitochondrion. Functionally, has a role in meiosis. The protein is Meiotically up-regulated gene 163 protein (mug163) of Schizosaccharomyces pombe (strain 972 / ATCC 24843) (Fission yeast).